The following is a 463-amino-acid chain: L-seryl-tRNA(Sec) selenium transferase (463 aa).

Lysine 295 bears the N6-(pyridoxal phosphate)lysine mark.

The protein belongs to the SelA family. As to quaternary structure, homodecamer; pentamer of dimers. Binds only one seryl-tRNA(Sec) per dimer. It depends on pyridoxal 5'-phosphate as a cofactor.

Its subcellular location is the cytoplasm. The catalysed reaction is L-seryl-tRNA(Sec) + selenophosphate + H(+) = L-selenocysteinyl-tRNA(Sec) + phosphate. It participates in aminoacyl-tRNA biosynthesis; selenocysteinyl-tRNA(Sec) biosynthesis; selenocysteinyl-tRNA(Sec) from L-seryl-tRNA(Sec) (bacterial route): step 1/1. Functionally, converts seryl-tRNA(Sec) to selenocysteinyl-tRNA(Sec) required for selenoprotein biosynthesis. The sequence is that of L-seryl-tRNA(Sec) selenium transferase from Escherichia fergusonii (strain ATCC 35469 / DSM 13698 / CCUG 18766 / IAM 14443 / JCM 21226 / LMG 7866 / NBRC 102419 / NCTC 12128 / CDC 0568-73).